Here is a 269-residue protein sequence, read N- to C-terminus: Tryptophan synthase alpha chain (269 aa).

Active-site proton acceptor residues include glutamate 49 and aspartate 60.

The protein belongs to the TrpA family. As to quaternary structure, tetramer of two alpha and two beta chains.

It carries out the reaction (1S,2R)-1-C-(indol-3-yl)glycerol 3-phosphate + L-serine = D-glyceraldehyde 3-phosphate + L-tryptophan + H2O. It functions in the pathway amino-acid biosynthesis; L-tryptophan biosynthesis; L-tryptophan from chorismate: step 5/5. In terms of biological role, the alpha subunit is responsible for the aldol cleavage of indoleglycerol phosphate to indole and glyceraldehyde 3-phosphate. The polypeptide is Tryptophan synthase alpha chain (Actinobacillus succinogenes (strain ATCC 55618 / DSM 22257 / CCUG 43843 / 130Z)).